The primary structure comprises 223 residues: ATP-dependent dethiobiotin synthetase BioD (223 aa).

Residue threonine 16 participates in Mg(2+) binding. Lysine 37 is an active-site residue. Serine 41 provides a ligand contact to substrate. 2 residues coordinate Mg(2+): aspartate 50 and glutamate 111. Residues aspartate 50, 111 to 114, and 171 to 172 contribute to the ATP site; these read EGAG and NR.

The protein belongs to the dethiobiotin synthetase family. In terms of assembly, homodimer. It depends on Mg(2+) as a cofactor.

It localises to the cytoplasm. The catalysed reaction is (7R,8S)-7,8-diammoniononanoate + CO2 + ATP = (4R,5S)-dethiobiotin + ADP + phosphate + 3 H(+). The protein operates within cofactor biosynthesis; biotin biosynthesis; biotin from 7,8-diaminononanoate: step 1/2. Its function is as follows. Catalyzes a mechanistically unusual reaction, the ATP-dependent insertion of CO2 between the N7 and N8 nitrogen atoms of 7,8-diaminopelargonic acid (DAPA, also called 7,8-diammoniononanoate) to form a ureido ring. In Anaeromyxobacter sp. (strain K), this protein is ATP-dependent dethiobiotin synthetase BioD.